We begin with the raw amino-acid sequence, 344 residues long: Arginine N-succinyltransferase (344 aa).

Leu-125 is a binding site for succinyl-CoA. His-229 acts as the Proton donor in catalysis.

It belongs to the arginine N-succinyltransferase family.

It carries out the reaction succinyl-CoA + L-arginine = N(2)-succinyl-L-arginine + CoA + H(+). The protein operates within amino-acid degradation; L-arginine degradation via AST pathway; L-glutamate and succinate from L-arginine: step 1/5. Catalyzes the transfer of succinyl-CoA to arginine to produce N(2)-succinylarginine. In Salmonella arizonae (strain ATCC BAA-731 / CDC346-86 / RSK2980), this protein is Arginine N-succinyltransferase.